The chain runs to 340 residues: L-threonine 3-dehydrogenase (340 aa).

C38 is a binding site for Zn(2+). Active-site charge relay system residues include T40 and H43. The Zn(2+) site is built by H63, E64, C93, C96, C99, and C107. Residues I175, D195, R200, 262 to 264 (LGI), and 286 to 287 (IY) each bind NAD(+).

The protein belongs to the zinc-containing alcohol dehydrogenase family. As to quaternary structure, homotetramer. It depends on Zn(2+) as a cofactor.

The protein localises to the cytoplasm. It catalyses the reaction L-threonine + NAD(+) = (2S)-2-amino-3-oxobutanoate + NADH + H(+). Its pathway is amino-acid degradation; L-threonine degradation via oxydo-reductase pathway; glycine from L-threonine: step 1/2. Its function is as follows. Catalyzes the NAD(+)-dependent oxidation of L-threonine to 2-amino-3-ketobutyrate. This is L-threonine 3-dehydrogenase from Pseudoalteromonas atlantica (strain T6c / ATCC BAA-1087).